A 192-amino-acid polypeptide reads, in one-letter code: Type 1 phosphatases regulator YPI2 (192 aa).

2 disordered regions span residues 1-53 (MLQR…GKHK) and 65-192 (EFGQ…PVQK). Over residues 8–18 (QTSSSTQTETT) the composition is skewed to low complexity. The span at 25–49 (RRPETRQKEDSKVKWTEDVIDNEHM) shows a compositional bias: basic and acidic residues. Low complexity predominate over residues 69-79 (SSDESSDSSSD). Over residues 86–103 (YERNNDFDQNHRHSHNFD) the composition is skewed to basic and acidic residues. Polar residues predominate over residues 134 to 148 (KGNTGMSKPSSSSPD). Residues 157 to 169 (IHKRNKKVRKPKR) show a composition bias toward basic residues.

It belongs to the YPI1 family.

Its subcellular location is the nucleus. In terms of biological role, regulator of type 1 phosphatases which maintains protein phosphatase activity under strict control. In Scheffersomyces stipitis (strain ATCC 58785 / CBS 6054 / NBRC 10063 / NRRL Y-11545) (Yeast), this protein is Type 1 phosphatases regulator YPI2 (YPI2).